Here is a 283-residue protein sequence, read N- to C-terminus: NifU-like protein 4, mitochondrial (283 aa).

Residues 1 to 48 (MKGIARLVTSLSRIGGRKVVSGTSTVTSSSSSSLLLSRRSLFISATNL) constitute a mitochondrion transit peptide.

It belongs to the NifU family. In terms of tissue distribution, predominantly expressed in roots.

Its subcellular location is the mitochondrion. Its function is as follows. Molecular scaffold for [Fe-S] cluster assembly of mitochondrial iron-sulfur proteins. The protein is NifU-like protein 4, mitochondrial (NIFU4) of Arabidopsis thaliana (Mouse-ear cress).